The following is a 220-amino-acid chain: Probable acrEF/envCD operon repressor (220 aa).

In terms of domain architecture, HTH tetR-type spans 10-70; sequence LKTRQELIET…EMWLQQPSLR (61 aa). Positions 33–52 form a DNA-binding region, H-T-H motif; it reads TLNDIADAANVTRGAIYWHF.

Functionally, potential regulator protein for the acrEF/envCD genes. The protein is Probable acrEF/envCD operon repressor (envR) of Escherichia coli O157:H7.